Consider the following 211-residue polypeptide: Peptidyl-tRNA hydrolase (211 aa).

A tRNA-binding site is contributed by Tyr-15. The active-site Proton acceptor is the His-20. TRNA-binding residues include Phe-66, Asn-68, and Asn-114. The segment at 189–211 (TKPPRPKATRPAQAQAAPQAGAD) is disordered. A compositionally biased stretch (low complexity) spans 197–211 (TRPAQAQAAPQAGAD).

Belongs to the PTH family. As to quaternary structure, monomer.

The protein resides in the cytoplasm. The enzyme catalyses an N-acyl-L-alpha-aminoacyl-tRNA + H2O = an N-acyl-L-amino acid + a tRNA + H(+). In terms of biological role, hydrolyzes ribosome-free peptidyl-tRNAs (with 1 or more amino acids incorporated), which drop off the ribosome during protein synthesis, or as a result of ribosome stalling. Catalyzes the release of premature peptidyl moieties from peptidyl-tRNA molecules trapped in stalled 50S ribosomal subunits, and thus maintains levels of free tRNAs and 50S ribosomes. In Acidovorax ebreus (strain TPSY) (Diaphorobacter sp. (strain TPSY)), this protein is Peptidyl-tRNA hydrolase.